A 232-amino-acid polypeptide reads, in one-letter code: Rho-related GTP-binding protein Rho6 (232 aa).

Residues 23 to 28, 38 to 45, 67 to 71, 125 to 128, and 169 to 170 contribute to the GTP site; these read QCGKTA, YPETYVPT, DTSGS, CKTD, and AF. An Effector region motif is present at residues 42–50; that stretch reads YVPTVFENY. Cys-229 is modified (cysteine methyl ester). The S-geranylgeranyl cysteine moiety is linked to residue Cys-229. The propeptide at 230-232 is removed in mature form; that stretch reads SIM.

The protein belongs to the small GTPase superfamily. Rho family. In terms of assembly, binds GRB7 and PLXNB1. Interacts with PLXNA2. Interacts with UBXD5.

The protein resides in the cell membrane. Its subcellular location is the cytoplasm. The protein localises to the cytoskeleton. In terms of biological role, lacks intrinsic GTPase activity. Has a low affinity for GDP, and constitutively binds GTP. Controls rearrangements of the actin cytoskeleton. Induces the Rac-dependent neuritic process formation in part by disruption of the cortical actin filaments. Causes the formation of many neuritic processes from the cell body with disruption of the cortical actin filaments. This chain is Rho-related GTP-binding protein Rho6 (Rnd1), found in Mus musculus (Mouse).